The sequence spans 255 residues: tRNA pseudouridine synthase B (255 aa).

Aspartate 52 serves as the catalytic Nucleophile. Tyrosine 80, tyrosine 183, and leucine 204 together coordinate substrate.

Belongs to the pseudouridine synthase TruB family. Type 1 subfamily.

It catalyses the reaction uridine(55) in tRNA = pseudouridine(55) in tRNA. Functionally, responsible for synthesis of pseudouridine from uracil-55 in the psi GC loop of transfer RNAs. This Blochmanniella floridana protein is tRNA pseudouridine synthase B.